The sequence spans 350 residues: Holliday junction branch migration complex subunit RuvB (350 aa).

A large ATPase domain (RuvB-L) region spans residues 1-186 (MAGHEEEDER…FGIPLRLDFY (186 aa)). ATP contacts are provided by residues leucine 25, arginine 26, glycine 67, lysine 70, threonine 71, threonine 72, 133-135 (EDF), arginine 176, tyrosine 186, and arginine 223. Residue threonine 71 participates in Mg(2+) binding. Residues 187–257 (ETDELVQIVT…IADAALNRLE (71 aa)) form a small ATPAse domain (RuvB-S) region. Positions 260–350 (GRGLDAMDRR…VQPDLWSDAP (91 aa)) are head domain (RuvB-H). 3 residues coordinate DNA: arginine 296, arginine 315, and arginine 320.

The protein belongs to the RuvB family. In terms of assembly, homohexamer. Forms an RuvA(8)-RuvB(12)-Holliday junction (HJ) complex. HJ DNA is sandwiched between 2 RuvA tetramers; dsDNA enters through RuvA and exits via RuvB. An RuvB hexamer assembles on each DNA strand where it exits the tetramer. Each RuvB hexamer is contacted by two RuvA subunits (via domain III) on 2 adjacent RuvB subunits; this complex drives branch migration. In the full resolvosome a probable DNA-RuvA(4)-RuvB(12)-RuvC(2) complex forms which resolves the HJ.

Its subcellular location is the cytoplasm. It carries out the reaction ATP + H2O = ADP + phosphate + H(+). Functionally, the RuvA-RuvB-RuvC complex processes Holliday junction (HJ) DNA during genetic recombination and DNA repair, while the RuvA-RuvB complex plays an important role in the rescue of blocked DNA replication forks via replication fork reversal (RFR). RuvA specifically binds to HJ cruciform DNA, conferring on it an open structure. The RuvB hexamer acts as an ATP-dependent pump, pulling dsDNA into and through the RuvAB complex. RuvB forms 2 homohexamers on either side of HJ DNA bound by 1 or 2 RuvA tetramers; 4 subunits per hexamer contact DNA at a time. Coordinated motions by a converter formed by DNA-disengaged RuvB subunits stimulates ATP hydrolysis and nucleotide exchange. Immobilization of the converter enables RuvB to convert the ATP-contained energy into a lever motion, pulling 2 nucleotides of DNA out of the RuvA tetramer per ATP hydrolyzed, thus driving DNA branch migration. The RuvB motors rotate together with the DNA substrate, which together with the progressing nucleotide cycle form the mechanistic basis for DNA recombination by continuous HJ branch migration. Branch migration allows RuvC to scan DNA until it finds its consensus sequence, where it cleaves and resolves cruciform DNA. This Rhodospirillum rubrum (strain ATCC 11170 / ATH 1.1.1 / DSM 467 / LMG 4362 / NCIMB 8255 / S1) protein is Holliday junction branch migration complex subunit RuvB.